We begin with the raw amino-acid sequence, 130 residues long: Small ribosomal subunit protein uS9 (130 aa).

This sequence belongs to the universal ribosomal protein uS9 family.

This Shigella sonnei (strain Ss046) protein is Small ribosomal subunit protein uS9.